A 264-amino-acid polypeptide reads, in one-letter code: MRAYLDLMQKILDEGTVKSDRTGTGTISLFGHQMRFNLAEGFPLVTTKKCHLRSIIHELLWFLNGDTNTAYLKEHGVSIWDEWADENGDLGPVYGAQWRSWPAADGSVIDQIQKAVDDIKHNPDSRRIIVSAWNVGELDKMALAPCHAFFQFYVADGKLSCQLYQRSCDVFLGLPFNIASYALLTHMMAQQCDLEVGDFVWTGGDVHLYSNHMEQTALQLTREPRPLPTLVIKRKPDSIFDYKFEDFEIEGYDPHPGIKAPVAI.

A dUMP-binding site is contributed by Arg21. His51 is a binding site for (6R)-5,10-methylene-5,6,7,8-tetrahydrofolate. 126–127 (RR) lines the dUMP pocket. The active-site Nucleophile is Cys146. DUMP-binding positions include 166 to 169 (RSCD), Asn177, and 207 to 209 (HLY). A (6R)-5,10-methylene-5,6,7,8-tetrahydrofolate-binding site is contributed by Asp169. Ala263 contacts (6R)-5,10-methylene-5,6,7,8-tetrahydrofolate.

This sequence belongs to the thymidylate synthase family. Bacterial-type ThyA subfamily. Homodimer.

The protein localises to the cytoplasm. It carries out the reaction dUMP + (6R)-5,10-methylene-5,6,7,8-tetrahydrofolate = 7,8-dihydrofolate + dTMP. The protein operates within pyrimidine metabolism; dTTP biosynthesis. Catalyzes the reductive methylation of 2'-deoxyuridine-5'-monophosphate (dUMP) to 2'-deoxythymidine-5'-monophosphate (dTMP) while utilizing 5,10-methylenetetrahydrofolate (mTHF) as the methyl donor and reductant in the reaction, yielding dihydrofolate (DHF) as a by-product. This enzymatic reaction provides an intracellular de novo source of dTMP, an essential precursor for DNA biosynthesis. The sequence is that of Thymidylate synthase from Aeromonas hydrophila subsp. hydrophila (strain ATCC 7966 / DSM 30187 / BCRC 13018 / CCUG 14551 / JCM 1027 / KCTC 2358 / NCIMB 9240 / NCTC 8049).